Consider the following 549-residue polypeptide: Cation/acetate symporter ActP (549 aa).

Transmembrane regions (helical) follow at residues 33–53, 77–97, 103–123, 148–168, 183–203, 206–226, 262–282, 303–323, 355–375, 404–424, 428–448, 464–484, and 493–513; these read WQAIIMFLIFVVFTLGITYWA, LAIAGDYMSAASFLGISALVF, GLIYSLGFLVGWPIILFLIAE, ILSACGSLVVVALYLIAQMVG, IAVVLVGVLMMMYVLFGGMLA, WVQIIKAVLLLFGASFMAFMV, ISALSLGLGLMFGTAGLPHIL, GFMGYFYILTFIIGFGAIMLV, LFLGFISAVAFATILAVVAGL, VSKITVLVLGVIAIILGVLFE, IAFMVGLAFAIAASCNFPIIL, GGWLGLLTAVVLMILGPTIWV, and IFPYEYPALFSISVAFLGIWF.

It belongs to the sodium:solute symporter (SSF) (TC 2.A.21) family.

Its subcellular location is the cell inner membrane. In terms of biological role, transports acetate. In Salmonella agona (strain SL483), this protein is Cation/acetate symporter ActP.